Here is a 670-residue protein sequence, read N- to C-terminus: Solute carrier organic anion transporter family member 1A4 (670 aa).

The Cytoplasmic portion of the chain corresponds to 1-20 (MGKSEKEVATHGVRCFSKIK). A helical membrane pass occupies residues 21-40 (AFLLALTCAYVSKSLSGTYM). Residues 41–59 (NSMLTQIERQFGIPTSVVG) are Extracellular-facing. The chain crosses the membrane as a helical span at residues 60 to 80 (LINGSFEIGNLLLIIFVSYFG). Residues 81–86 (TKLHRP) are Cytoplasmic-facing. The chain crosses the membrane as a helical span at residues 87 to 111 (IMIGVGCAVMGLGCFLISIPHFLMG). At 112 to 155 (RYEYETTILPTSNLSSNSFVCTENRTQTLKPTQDPTECVKEMKS) the chain is on the extracellular side. 2 N-linked (GlcNAc...) asparagine glycosylation sites follow: N124 and N135. The chain crosses the membrane as a helical span at residues 156–184 (LMWIYVLVGNIIRGMGETPIMPLGISYIE). Topologically, residues 185–203 (DFAKSENSPLYIGILETGM) are cytoplasmic. The chain crosses the membrane as a helical span at residues 204-224 (TIGPLIGLLLGSSCANIYVDT). The Extracellular portion of the chain corresponds to 225-242 (GSVNTDDLTITPTDTRWV). A helical membrane pass occupies residues 243 to 267 (GAWWIGFLVCAGVNILTSIPFFFFP). Residues 268-311 (KTLLKEGLQDNGDGTENAKEEKHREKIKEENRGITKDFFLFMKS) are Cytoplasmic-facing. Residues 312 to 333 (LSCNPIYMIFILISVIQVNAFI) traverse the membrane as a helical segment. Over 334–353 (NSFTFMPKYLEQQYGKSTAE) the chain is Extracellular. A helical transmembrane segment spans residues 354–377 (IVFLMGLYMLPPICLGYLIGGLIM). Residues 378–381 (KKFK) are Cytoplasmic-facing. A helical transmembrane segment spans residues 382-405 (ITVKKAAYIGFWLSLTEYLLSFVS). The Extracellular segment spans residues 406–513 (YIMTCDNFPV…PECANKLQYF (108 aa)). The region spanning 433 to 488 (NNVLADCNTKCSCLTNTWDPVCGDNGLSYMSACLAGCEKSVGTGTNMVFQNCSCIQ) is the Kazal-like domain. 3 disulfide bridges follow: C439/C469, C445/C465, and C454/C486. N-linked (GlcNAc...) asparagine glycosylation is found at N483 and N492. Residues 514–536 (LIISIIGCFIFSLGAIPGYMVLL) traverse the membrane as a helical segment. Topologically, residues 537–545 (RCMKSEEKS) are cytoplasmic. A helical transmembrane segment spans residues 546–571 (LGVGLHTFCMRILGGIPAPIYFGALI). The Extracellular portion of the chain corresponds to 572–605 (DRTCLHWGTLKCGEPGACRMYDINSFRRIYLGLP). The chain crosses the membrane as a helical span at residues 606-623 (AALRGASFLPALFILILM). Residues 624-670 (RKFQFPGDIDSSDTDPAEMKLTAKESKCTNVHRSPTMQNDGERKTKL) lie on the Cytoplasmic side of the membrane. Phosphoserine occurs at positions 634 and 635. The interval 649–670 (SKCTNVHRSPTMQNDGERKTKL) is disordered. The segment covering 651 to 662 (CTNVHRSPTMQN) has biased composition (polar residues).

This sequence belongs to the organo anion transporter (TC 2.A.60) family. Highly expressed in brain and liver. Detected at very low levels in heart and lung.

It is found in the cell membrane. The catalysed reaction is estrone 3-sulfate(out) = estrone 3-sulfate(in). It catalyses the reaction taurocholate(out) = taurocholate(in). It carries out the reaction prostaglandin E2(out) = prostaglandin E2(in). The enzyme catalyses L-thyroxine(out) = L-thyroxine(in). Mediates the Na(+)-independent transport of organic anions such as taurocholate, cholate, 17-beta-glucuronosyl estradiol, prostaglandin E2, estrone 3-sulfate, L-thyroxine (T4), the cardiac glycosides ouabain and digoxin and thyroid hormones. Shows a pH-sensitive substrate specificity which may be ascribed to the protonation state of the binding site and leads to a stimulation of substrate transport in an acidic microenvironment. Hydrogencarbonate/HCO3(-) acts as the probable counteranion that exchanges for organic anions. The chain is Solute carrier organic anion transporter family member 1A4 (Slco1a4) from Mus musculus (Mouse).